The primary structure comprises 55 residues: Large ribosomal subunit protein bL33 (55 aa).

The protein belongs to the bacterial ribosomal protein bL33 family.

The chain is Large ribosomal subunit protein bL33 from Photorhabdus laumondii subsp. laumondii (strain DSM 15139 / CIP 105565 / TT01) (Photorhabdus luminescens subsp. laumondii).